The primary structure comprises 96 residues: NADH-ubiquinone oxidoreductase chain 4L (96 aa).

The next 3 helical transmembrane spans lie at 1–21 (MPTT…SLQR), 27–47 (LLLT…LWAL), and 57–77 (APLI…SLMI).

This sequence belongs to the complex I subunit 4L family.

The protein localises to the mitochondrion membrane. It catalyses the reaction a ubiquinone + NADH + 5 H(+)(in) = a ubiquinol + NAD(+) + 4 H(+)(out). Its function is as follows. Core subunit of the mitochondrial membrane respiratory chain NADH dehydrogenase (Complex I) which catalyzes electron transfer from NADH through the respiratory chain, using ubiquinone as an electron acceptor. Part of the enzyme membrane arm which is embedded in the lipid bilayer and involved in proton translocation. The protein is NADH-ubiquinone oxidoreductase chain 4L (MT-ND4L) of Petromyzon marinus (Sea lamprey).